Here is a 604-residue protein sequence, read N- to C-terminus: Kelch-like protein 20 (604 aa).

One can recognise a BTB domain in the interval 63 to 130; sequence CDVVLVVGAK…SYTSQITVEE (68 aa). In terms of domain architecture, BACK spans 165 to 267; sequence CLGIRAFADT…SPKFLVGTVG (103 aa). Kelch repeat units follow at residues 314–360, 362–408, 409–455, 457–502, 504–549, and 551–596; these read VLFA…VLDD, LYAV…VLGG, YLYA…VLGG, LYAV…VYQD, IYAV…VVNG, and LMAV…VIKM.

Component of the BCR(KLHL20) E3 ubiquitin ligase complex, at least composed of cul3, klhl20 and rbx1.

The protein resides in the cytoplasm. Its subcellular location is the perinuclear region. It is found in the nucleus. The protein operates within protein modification; protein ubiquitination. Functionally, substrate-specific adapter of a BCR (BTB-CUL3-RBX1) E3 ubiquitin-protein ligase complex involved in interferon response and anterograde Golgi to endosome transport. The BCR(KLHL20) E3 ubiquitin ligase complex mediates the ubiquitination of target proteins, leading to their degradation by the proteasome. It also specifically mediates 'Lys-33'-linked ubiquitination. The protein is Kelch-like protein 20 (klhl20) of Xenopus laevis (African clawed frog).